Consider the following 197-residue polypeptide: Holliday junction branch migration complex subunit RuvA (197 aa).

Residues 1 to 63 (MFDYIKGQLT…EDAHLLFGFH (63 aa)) are domain I. A domain II region spans residues 64–142 (TENEKDVFLK…TIPEGGQAQQ (79 aa)). A flexible linker region spans residues 142-146 (QMPKA). The tract at residues 147–197 (KGNQQLDEAIEALLALGYKATELKKIRAFFEGTDDTAEQYIKSALKMLMKG) is domain III.

This sequence belongs to the RuvA family. Homotetramer. Forms an RuvA(8)-RuvB(12)-Holliday junction (HJ) complex. HJ DNA is sandwiched between 2 RuvA tetramers; dsDNA enters through RuvA and exits via RuvB. An RuvB hexamer assembles on each DNA strand where it exits the tetramer. Each RuvB hexamer is contacted by two RuvA subunits (via domain III) on 2 adjacent RuvB subunits; this complex drives branch migration. In the full resolvosome a probable DNA-RuvA(4)-RuvB(12)-RuvC(2) complex forms which resolves the HJ.

Its subcellular location is the cytoplasm. Its function is as follows. The RuvA-RuvB-RuvC complex processes Holliday junction (HJ) DNA during genetic recombination and DNA repair, while the RuvA-RuvB complex plays an important role in the rescue of blocked DNA replication forks via replication fork reversal (RFR). RuvA specifically binds to HJ cruciform DNA, conferring on it an open structure. The RuvB hexamer acts as an ATP-dependent pump, pulling dsDNA into and through the RuvAB complex. HJ branch migration allows RuvC to scan DNA until it finds its consensus sequence, where it cleaves and resolves the cruciform DNA. This Streptococcus uberis (strain ATCC BAA-854 / 0140J) protein is Holliday junction branch migration complex subunit RuvA.